The chain runs to 291 residues: Gamma-gliadin B (291 aa).

Positions 1-19 are cleaved as a signal peptide; it reads MKTLLILTILAMAITIATA. Positions 38–81 are enriched in low complexity; the sequence is LQPHQPFSQQPQQIFPQPQQTFPHQPQQQFPQPQQPQQQFLQPR. A disordered region spans residues 38–137; that stretch reads LQPHQPFSQQ…QSFPQQQPSL (100 aa). Over residues 82-99 the composition is skewed to pro residues; that stretch reads QPFPQQPQQPYPQQPQQP. Composition is skewed to low complexity over residues 100–117 and 125–137; these read FPQT…KQPQ and QPQQ…QPSL.

It belongs to the gliadin/glutenin family.

In terms of biological role, gliadin is the major seed storage protein in wheat. This chain is Gamma-gliadin B, found in Triticum aestivum (Wheat).